The chain runs to 399 residues: Serine palmitoyltransferase (399 aa).

Residues 113–114 (GF), His213, Thr241, and Ser243 each bind pyridoxal 5'-phosphate. An N6-(pyridoxal phosphate)lysine modification is found at Lys244.

It belongs to the class-II pyridoxal-phosphate-dependent aminotransferase family. In terms of assembly, homodimer. Pyridoxal 5'-phosphate serves as cofactor.

Its subcellular location is the cytoplasm. The protein localises to the cell inner membrane. The enzyme catalyses L-serine + hexadecanoyl-CoA + H(+) = 3-oxosphinganine + CO2 + CoA. It functions in the pathway lipid metabolism; sphingolipid metabolism. Functionally, catalyzes the condensation of L-serine with palmitoyl-CoA (hexadecanoyl-CoA) to produce 3-oxosphinganine. Exhibits a broad substrate specificity concerning the chain length and the degree of unsaturation of acyl-CoA. This Sphingobacterium multivorum protein is Serine palmitoyltransferase.